We begin with the raw amino-acid sequence, 560 residues long: DNA ligase B (560 aa).

K124 (N6-AMP-lysine intermediate) is an active-site residue.

Belongs to the NAD-dependent DNA ligase family. LigB subfamily.

The enzyme catalyses NAD(+) + (deoxyribonucleotide)n-3'-hydroxyl + 5'-phospho-(deoxyribonucleotide)m = (deoxyribonucleotide)n+m + AMP + beta-nicotinamide D-nucleotide.. Its function is as follows. Catalyzes the formation of phosphodiester linkages between 5'-phosphoryl and 3'-hydroxyl groups in double-stranded DNA using NAD as a coenzyme and as the energy source for the reaction. In Escherichia coli O157:H7, this protein is DNA ligase B.